A 71-amino-acid chain; its full sequence is MAQYHQQHEMKQTMAETQYVTAPPPMGYPVMMKDSPQTVQPPHEGQSKGSGGFLRGCLAAMCCCCVLDCVF.

The tract at residues 30 to 49 is disordered; sequence VMMKDSPQTVQPPHEGQSKG. A helical transmembrane segment spans residues 48–64; sequence KGSGGFLRGCLAAMCCC.

The protein belongs to the CYSTM1 family. In terms of assembly, heterodimers. Interacts with CYSTM7 and WIH1/CYSTM13. In terms of tissue distribution, mostly expressed in leaves and flowers and, to a lower extent, in stems, siliques, shoots and roots.

The protein localises to the cell membrane. It localises to the cytoplasm. It is found in the mitochondrion. Negatively regulates salt stress responses and Na(+) homeostasis. Prevents Na(+) efflux, disturbs reactive oxygen species (ROS) homeostasis, and represses the expression of nuclear salt stress-responsive genes. Involved in resistance to abiotic stress. This Arabidopsis thaliana (Mouse-ear cress) protein is Protein CYSTEINE-RICH TRANSMEMBRANE MODULE 3.